The primary structure comprises 1086 residues: Lysine-specific demethylase 4B (1086 aa).

Positions Ile-15 to Arg-57 constitute a JmjN domain. Tyr-133 contributes to the 2-oxoglutarate binding site. Positions Val-146 to Cys-309 constitute a JmjC domain. Fe cation is bound by residues His-189 and Glu-191. Positions 199 and 207 each coordinate 2-oxoglutarate. The Zn(2+) site is built by Cys-235 and His-241. Lys-242 contributes to the 2-oxoglutarate binding site. Residue His-277 participates in Fe cation binding. Positions 307 and 309 each coordinate Zn(2+). The segment covering Ser-379 to Arg-395 has biased composition (basic and acidic residues). Disordered regions lie at residues Ser-379 to Ala-536 and Pro-575 to Val-624. Basic residues predominate over residues Ser-401–Lys-410. A compositionally biased stretch (acidic residues) spans Met-441–Leu-450. The span at His-456–Gly-467 shows a compositional bias: basic and acidic residues. Residues Lys-468–Thr-480 show a composition bias toward basic residues. Low complexity predominate over residues Gly-512–Gly-522. Over residues Gln-585–Phe-597 the composition is skewed to polar residues. Lys-599 carries the N6-acetyllysine modification. The PHD-type 1 zinc finger occupies Met-719 to Ala-777. Residues Thr-782–Val-815 form a C2HC pre-PHD-type zinc finger. Residues Leu-838–Arg-895 form a PHD-type 2 zinc finger. Tudor domains lie at Arg-905–Leu-962 and Gly-963–Pro-1019. The segment at Ser-1024–Val-1043 is disordered. Residues Leu-1026–Ser-1037 are compositionally biased toward polar residues.

This sequence belongs to the JHDM3 histone demethylase family. It depends on Fe(2+) as a cofactor.

It localises to the nucleus. The catalysed reaction is N(6),N(6),N(6)-trimethyl-L-lysyl(9)-[histone H3] + 2 2-oxoglutarate + 2 O2 = N(6)-methyl-L-lysyl(9)-[histone H3] + 2 formaldehyde + 2 succinate + 2 CO2. In terms of biological role, histone demethylase that specifically demethylates 'Lys-9' of histone H3, thereby playing a role in histone code. Does not demethylate histone H3 'Lys-4', H3 'Lys-27', H3 'Lys-36' nor H4 'Lys-20'. Only able to demethylate trimethylated H3 'Lys-9', with a weaker activity than KDM4A, KDM4C and KDM4D. Demethylation of Lys residue generates formaldehyde and succinate. Plays a critical role in the development of the central nervous system (CNS). This Mus musculus (Mouse) protein is Lysine-specific demethylase 4B (Kdm4b).